The chain runs to 319 residues: MDLLTLEGWLDNTAFAVLFLTMLLYWCGAAFPQWPLLTAAGRTGMAIANLCITGLLAARWIEGGYFPISNLYESLFFLCWGLTAMHFVAESISGQPLVGVVTAPVAMGITAFAALSLPPEMQQSAPLVPALKSNWLMMHVSVMMLSYATLMVGSLLAIALLVVTWGQPVNLKGSSVGTGSFRSRRPEPSLEASTGNGGTTVLTPPALQLSLQRLTLAETLDNLSYRMIGLGFPLLTIGIISGAVWANEAWGAPWSWDPKETWALIVWLVYAAYLHARMTRDWQGRKPAILATVGFGVVWVCYLGVNLLGKGLHSYGWFF.

5 consecutive transmembrane segments (helical) span residues 14-34 (AFAV…FPQW), 46-66 (AIAN…GGYF), 74-94 (SLFF…SISG), 97-117 (LVGV…ALSL), and 142-162 (VMML…ALLV). The segment at 175–201 (SVGTGSFRSRRPEPSLEASTGNGGTTV) is disordered. Positions 191-201 (EASTGNGGTTV) are enriched in polar residues. The next 3 helical transmembrane spans lie at 227–247 (MIGL…VWAN), 254–274 (WSWD…AAYL), and 288–308 (AILA…VNLL).

This sequence belongs to the CcmF/CycK/Ccl1/NrfE/CcsA family. May interact with ccs1.

Its subcellular location is the cellular thylakoid membrane. Its function is as follows. Required during biogenesis of c-type cytochromes (cytochrome c6 and cytochrome f) at the step of heme attachment. This Thermosynechococcus vestitus (strain NIES-2133 / IAM M-273 / BP-1) protein is Cytochrome c biogenesis protein CcsA.